A 328-amino-acid chain; its full sequence is Ketol-acid reductoisomerase (NADP(+)) (328 aa).

Positions Met-1–Thr-181 constitute a KARI N-terminal Rossmann domain. Residues Tyr-24–Gln-27, Arg-47, Ser-52, and Asp-82–Gln-85 each bind NADP(+). The active site involves His-107. Gly-133 is an NADP(+) binding site. Positions Thr-182–Glu-327 constitute a KARI C-terminal knotted domain. Mg(2+) is bound by residues Asp-190, Glu-194, Glu-226, and Glu-230. Residue Ser-251 coordinates substrate.

This sequence belongs to the ketol-acid reductoisomerase family. Mg(2+) serves as cofactor.

It carries out the reaction (2R)-2,3-dihydroxy-3-methylbutanoate + NADP(+) = (2S)-2-acetolactate + NADPH + H(+). The enzyme catalyses (2R,3R)-2,3-dihydroxy-3-methylpentanoate + NADP(+) = (S)-2-ethyl-2-hydroxy-3-oxobutanoate + NADPH + H(+). It functions in the pathway amino-acid biosynthesis; L-isoleucine biosynthesis; L-isoleucine from 2-oxobutanoate: step 2/4. The protein operates within amino-acid biosynthesis; L-valine biosynthesis; L-valine from pyruvate: step 2/4. Functionally, involved in the biosynthesis of branched-chain amino acids (BCAA). Catalyzes an alkyl-migration followed by a ketol-acid reduction of (S)-2-acetolactate (S2AL) to yield (R)-2,3-dihydroxy-isovalerate. In the isomerase reaction, S2AL is rearranged via a Mg-dependent methyl migration to produce 3-hydroxy-3-methyl-2-ketobutyrate (HMKB). In the reductase reaction, this 2-ketoacid undergoes a metal-dependent reduction by NADPH to yield (R)-2,3-dihydroxy-isovalerate. The chain is Ketol-acid reductoisomerase (NADP(+)) from Methanothermobacter thermautotrophicus (strain ATCC 29096 / DSM 1053 / JCM 10044 / NBRC 100330 / Delta H) (Methanobacterium thermoautotrophicum).